The sequence spans 487 residues: N-succinylglutamate 5-semialdehyde dehydrogenase (487 aa).

221 to 226 (GSSDTG) is an NAD(+) binding site. Catalysis depends on residues Glu-244 and Cys-278.

It belongs to the aldehyde dehydrogenase family. AstD subfamily.

The enzyme catalyses N-succinyl-L-glutamate 5-semialdehyde + NAD(+) + H2O = N-succinyl-L-glutamate + NADH + 2 H(+). The protein operates within amino-acid degradation; L-arginine degradation via AST pathway; L-glutamate and succinate from L-arginine: step 4/5. In terms of biological role, catalyzes the NAD-dependent reduction of succinylglutamate semialdehyde into succinylglutamate. In Burkholderia vietnamiensis (strain G4 / LMG 22486) (Burkholderia cepacia (strain R1808)), this protein is N-succinylglutamate 5-semialdehyde dehydrogenase.